Reading from the N-terminus, the 114-residue chain is Transmembrane protein 14C (114 aa).

4 consecutive transmembrane segments (helical) span residues 8–28 (LMPLHYFGFGYAALVATGGII), 33–53 (AGSVPSLAAGLFFGGLAGLGA), 63–83 (VWVFLATSGTLAGIMGMRFYN), and 89–109 (PAGLIAGASLLMVAKVGISLL).

The protein belongs to the TMEM14 family.

Its subcellular location is the mitochondrion membrane. In terms of biological role, required for normal heme biosynthesis. The sequence is that of Transmembrane protein 14C (Tmem14c) from Mus musculus (Mouse).